We begin with the raw amino-acid sequence, 81 residues long: Small serum protein 4 (81 aa).

The N-terminal stretch at 1 to 19 (MKVFFILIIFSFTLATCQG) is a signal peptide. 3 cysteine pairs are disulfide-bonded: Cys21–Cys74, Cys41–Cys66, and Cys64–Cys73.

It belongs to the beta-microseminoprotein family.

It is found in the secreted. Functionally, shows an slight inhibitory effect toward the metalloproteinase brevilysin H6, but does not inhibit the metalloproteinases thermolysin, HR1A and HR1B. In Protobothrops flavoviridis (Habu), this protein is Small serum protein 4.